Consider the following 337-residue polypeptide: Serpentine receptor class delta-18 (337 aa).

Helical transmembrane passes span Ile2–Leu22, Val90–Phe110, Leu130–Ala150, Ile187–Leu207, Ala236–Leu256, and Ser270–Val290.

This sequence belongs to the nematode receptor-like protein srd family.

The protein resides in the membrane. The sequence is that of Serpentine receptor class delta-18 (srd-18) from Caenorhabditis elegans.